The primary structure comprises 176 residues: Xanthine-guanine phosphoribosyltransferase (176 aa).

Residues 51-52 and 110-118 contribute to the 5-phospho-alpha-D-ribose 1-diphosphate site; these read RG and DDLVDTGKT. Residue aspartate 111 participates in Mg(2+) binding. 2 residues coordinate guanine: aspartate 114 and isoleucine 157. Aspartate 114 and isoleucine 157 together coordinate xanthine. GMP contacts are provided by residues 114–118 and 156–157; these read DTGKT and WI.

The protein belongs to the purine/pyrimidine phosphoribosyltransferase family. XGPT subfamily. As to quaternary structure, homotetramer. Requires Mg(2+) as cofactor.

The protein resides in the cell inner membrane. It catalyses the reaction GMP + diphosphate = guanine + 5-phospho-alpha-D-ribose 1-diphosphate. The catalysed reaction is XMP + diphosphate = xanthine + 5-phospho-alpha-D-ribose 1-diphosphate. It carries out the reaction IMP + diphosphate = hypoxanthine + 5-phospho-alpha-D-ribose 1-diphosphate. It functions in the pathway purine metabolism; GMP biosynthesis via salvage pathway; GMP from guanine: step 1/1. Its pathway is purine metabolism; XMP biosynthesis via salvage pathway; XMP from xanthine: step 1/1. Purine salvage pathway enzyme that catalyzes the transfer of the ribosyl-5-phosphate group from 5-phospho-alpha-D-ribose 1-diphosphate (PRPP) to the N9 position of the 6-oxopurines guanine and xanthine to form the corresponding ribonucleotides GMP (guanosine 5'-monophosphate) and XMP (xanthosine 5'-monophosphate), with the release of PPi. To a lesser extent, also acts on hypoxanthine. This is Xanthine-guanine phosphoribosyltransferase from Bradyrhizobium diazoefficiens (strain JCM 10833 / BCRC 13528 / IAM 13628 / NBRC 14792 / USDA 110).